We begin with the raw amino-acid sequence, 207 residues long: Urease accessory protein UreG (207 aa).

Position 12-19 (12-19 (GPVGAGKT)) interacts with GTP.

This sequence belongs to the SIMIBI class G3E GTPase family. UreG subfamily. Homodimer. UreD, UreF and UreG form a complex that acts as a GTP-hydrolysis-dependent molecular chaperone, activating the urease apoprotein by helping to assemble the nickel containing metallocenter of UreC. The UreE protein probably delivers the nickel.

Its subcellular location is the cytoplasm. In terms of biological role, facilitates the functional incorporation of the urease nickel metallocenter. This process requires GTP hydrolysis, probably effectuated by UreG. In Cereibacter sphaeroides (strain ATCC 17025 / ATH 2.4.3) (Rhodobacter sphaeroides), this protein is Urease accessory protein UreG.